Here is a 345-residue protein sequence, read N- to C-terminus: uncharacterized protein (345 aa).

Residue methionine 1 is a domain, TBDR plug. The TBDR beta-barrel domain occupies 1–345; sequence MDLGPIYNTR…EVILNTKIEF (345 aa). The short motif at 328-345 is the TonB C-terminal box element; it reads PVALGYAREVILNTKIEF.

Belongs to the TonB-dependent receptor family.

It localises to the cell outer membrane. This is an uncharacterized protein from Haemophilus influenzae (strain ATCC 51907 / DSM 11121 / KW20 / Rd).